A 341-amino-acid chain; its full sequence is MIETDRLIVPTAVGPQEEQIERALRPRTLAEYVGQAKAREQLEIFIHAARKRSEALDHVLLFGPPGLGKTTLAHIIAREMGVNLRQTSGPVLERAGDLAALLTNLEPHDVLFIDEIHRLSPVVEEVLYPALEDFQIDIMIGEGPAARSVKLDLPPFTLVGATTRAGMLTNPLRDRFGIVARLEFYSAEELGYIVHRSAGLLQMNLDEAGALEIARRSRGTPRIANRLLRRVRDYAEVKAGGEATGAVADAALVMLDVDRAGLDVMDRKLLGAVVEKFMGGPVGLDNLAAAIGEERDTIEDVLEPYLIQQGYLQRTPRGRVATPLAYRHLGIATPASDAELF.

Residues 4–185 form a large ATPase domain (RuvB-L) region; it reads TDRLIVPTAV…FGIVARLEFY (182 aa). ATP-binding positions include L24, R25, G66, K69, T70, T71, 132-134, R175, Y185, and R222; that span reads EDF. Mg(2+) is bound at residue T70. The segment at 186 to 256 is small ATPAse domain (RuvB-S); it reads SAEELGYIVH…VADAALVMLD (71 aa). A head domain (RuvB-H) region spans residues 259–341; that stretch reads RAGLDVMDRK…ATPASDAELF (83 aa). Residues R295, R314, and R319 each contribute to the DNA site.

Belongs to the RuvB family. As to quaternary structure, homohexamer. Forms an RuvA(8)-RuvB(12)-Holliday junction (HJ) complex. HJ DNA is sandwiched between 2 RuvA tetramers; dsDNA enters through RuvA and exits via RuvB. An RuvB hexamer assembles on each DNA strand where it exits the tetramer. Each RuvB hexamer is contacted by two RuvA subunits (via domain III) on 2 adjacent RuvB subunits; this complex drives branch migration. In the full resolvosome a probable DNA-RuvA(4)-RuvB(12)-RuvC(2) complex forms which resolves the HJ.

The protein localises to the cytoplasm. The enzyme catalyses ATP + H2O = ADP + phosphate + H(+). Its function is as follows. The RuvA-RuvB-RuvC complex processes Holliday junction (HJ) DNA during genetic recombination and DNA repair, while the RuvA-RuvB complex plays an important role in the rescue of blocked DNA replication forks via replication fork reversal (RFR). RuvA specifically binds to HJ cruciform DNA, conferring on it an open structure. The RuvB hexamer acts as an ATP-dependent pump, pulling dsDNA into and through the RuvAB complex. RuvB forms 2 homohexamers on either side of HJ DNA bound by 1 or 2 RuvA tetramers; 4 subunits per hexamer contact DNA at a time. Coordinated motions by a converter formed by DNA-disengaged RuvB subunits stimulates ATP hydrolysis and nucleotide exchange. Immobilization of the converter enables RuvB to convert the ATP-contained energy into a lever motion, pulling 2 nucleotides of DNA out of the RuvA tetramer per ATP hydrolyzed, thus driving DNA branch migration. The RuvB motors rotate together with the DNA substrate, which together with the progressing nucleotide cycle form the mechanistic basis for DNA recombination by continuous HJ branch migration. Branch migration allows RuvC to scan DNA until it finds its consensus sequence, where it cleaves and resolves cruciform DNA. The chain is Holliday junction branch migration complex subunit RuvB from Thiobacillus denitrificans (strain ATCC 25259 / T1).